Reading from the N-terminus, the 65-residue chain is Large ribosomal subunit protein bL35 (65 aa).

It belongs to the bacterial ribosomal protein bL35 family.

The sequence is that of Large ribosomal subunit protein bL35 from Alkalilimnicola ehrlichii (strain ATCC BAA-1101 / DSM 17681 / MLHE-1).